The following is a 124-amino-acid chain: MaFF-interacting protein (124 aa).

The stretch at 54 to 96 (LVSEVEELYKSITALREKLLQAEQSLRNLKDIHMSLEKDVTAM) forms a coiled coil.

This sequence belongs to the tektin family. As to quaternary structure, interacts with MIS18A. Interacts (via its coiled-coil region) with MAFF. In terms of tissue distribution, strongly expressed in brain, kidney and ovary. Moderately expressed in liver, spleen, thymus, prostate, testis, small intestine and colon. Weakly expressed in heart, placenta, lung and leukocytes.

Its subcellular location is the cytoplasm. It localises to the nucleus. It is found in the nucleolus. Its function is as follows. Acts as a coactivator of MAFF transcriptional activity. Inhibits cell growth and colony-forming efficiency. This is MaFF-interacting protein (MAFIP) from Homo sapiens (Human).